A 501-amino-acid chain; its full sequence is Rhazimal synthase (501 aa).

Residues 4–24 (MQLSFASAVVYSLIFFVFLLV) form a helical membrane-spanning segment. N-linked (GlcNAc...) asparagine glycosylation is present at asparagine 282. Cysteine 442 is a binding site for heme.

Belongs to the cytochrome P450 family. Heme serves as cofactor.

It is found in the membrane. The enzyme catalyses (19E)-geissoschizine + reduced [NADPH--hemoprotein reductase] + O2 = rhazimal + oxidized [NADPH--hemoprotein reductase] + 2 H2O + H(+). It catalyses the reaction (19E)-geissoschizine + reduced [NADPH--hemoprotein reductase] + O2 = akuammicine + formate + oxidized [NADPH--hemoprotein reductase] + H2O + H(+). The protein operates within alkaloid biosynthesis. A cytochrome P450 monooxygenase involved in the biosynthesis of akuammilan monoterpene indole alkaloids (MIAs) natural products, components with various biological properties such as antidiabetic, antibacterial, anti-inflammatory, anticancer, and antimalarial activities. Catalyzes the conversion of geissoschizine to rhazimal. Can also, with lower efficiency, support the conversion of geissoschizine to akuammicine. The polypeptide is Rhazimal synthase (Alstonia scholaris (Dogbane)).